We begin with the raw amino-acid sequence, 224 residues long: MKPQNLKVPFFWEERSTEIKDNVLYIPNHYFKHDQFIMPSWEEFFGNNNPISCELCSGNGDWVVSQAQNMPQMNWIAVEKRFDRVRKIWSKMHNFQVSNLRIVCGEAQTFFRHYLKNEILQRIVVNFPDPWPKSRHRKHRLFQDEFMNDVVRVLVESGILVLATDDKNYLVEAIKMMRQCLLPTIEDPYYCKVLDNYGDSWFERLWRSKGQEIFYTEFVKKVGI.

Positions 54, 79, 106, and 129 each coordinate S-adenosyl-L-methionine. Asp129 is an active-site residue. 2 residues coordinate substrate: Lys133 and Asp165.

The protein belongs to the class I-like SAM-binding methyltransferase superfamily. TrmB family.

It carries out the reaction guanosine(46) in tRNA + S-adenosyl-L-methionine = N(7)-methylguanosine(46) in tRNA + S-adenosyl-L-homocysteine. It participates in tRNA modification; N(7)-methylguanine-tRNA biosynthesis. Catalyzes the formation of N(7)-methylguanine at position 46 (m7G46) in tRNA. This chain is tRNA (guanine-N(7)-)-methyltransferase, found in Chlamydia caviae (strain ATCC VR-813 / DSM 19441 / 03DC25 / GPIC) (Chlamydophila caviae).